A 652-amino-acid polypeptide reads, in one-letter code: Small ribosomal subunit protein mS39 (652 aa).

The transit peptide at 1 to 37 (MYLSRQLRLLPRANIACSLSSSGAHYTTAAPAEDAPI) directs the protein to the mitochondrion. PPR repeat units lie at residues 129-163 (DSVV…GNPI), 225-259 (TPQS…QVQL), 260-299 (DTNT…KLRP), 300-338 (NLGT…GVNP), and 547-581 (TGQM…QHRI).

This sequence belongs to the mitochondrion-specific ribosomal protein mS39 family.

It is found in the mitochondrion. In terms of biological role, mitochondrial protein that may have a role in mitochondrial translation. Essential for larval development. The protein is Small ribosomal subunit protein mS39 of Drosophila melanogaster (Fruit fly).